Here is a 408-residue protein sequence, read N- to C-terminus: Na(+)/H(+) antiporter NhaA 2 (408 aa).

11 helical membrane-spanning segments follow: residues 36–56 (GILL…GLGV), 79–99 (ILLW…GLEI), 115–135 (ALPV…YFLF), 145–165 (GWGI…SLLG), 174–194 (IFLA…IAVF), 197–217 (SELH…LMVF), 225–245 (LFFY…SGIH), 281–301 (FIIM…SEML), 310–330 (LGII…MSWL), 348–368 (VLGL…IALL), and 381–401 (FAIL…LSSY).

This sequence belongs to the NhaA Na(+)/H(+) (TC 2.A.33) antiporter family.

It localises to the cell inner membrane. The catalysed reaction is Na(+)(in) + 2 H(+)(out) = Na(+)(out) + 2 H(+)(in). Its function is as follows. Na(+)/H(+) antiporter that extrudes sodium in exchange for external protons. The protein is Na(+)/H(+) antiporter NhaA 2 of Flavobacterium johnsoniae (strain ATCC 17061 / DSM 2064 / JCM 8514 / BCRC 14874 / CCUG 350202 / NBRC 14942 / NCIMB 11054 / UW101) (Cytophaga johnsonae).